A 321-amino-acid chain; its full sequence is Basic peroxidase (321 aa).

The first 30 residues, Met-1 to Ala-30, serve as a signal peptide directing secretion. Gln-31 is subject to Pyrrolidone carboxylic acid. 4 cysteine pairs are disulfide-bonded: Cys-41–Cys-117, Cys-74–Cys-79, Cys-123–Cys-317, and Cys-202–Cys-228. His-72 functions as the Proton acceptor in the catalytic mechanism. 5 residues coordinate Ca(2+): Asp-73, Val-76, Gly-78, Asp-80, and Ser-82. Pro-165 serves as a coordination point for substrate. His-195 provides a ligand contact to heme b. Residue Thr-196 coordinates Ca(2+). 2 N-linked (GlcNAc...) asparagine glycosylation sites follow: Asn-211 and Asn-221. Residues Asp-241, Thr-244, and Asp-249 each coordinate Ca(2+).

The protein belongs to the peroxidase family. Classical plant (class III) peroxidase subfamily. It depends on heme b as a cofactor. The cofactor is Ca(2+). In terms of processing, N-glycosylated. In terms of tissue distribution, expressed in tracheary elements, roots, young and old hypocotyls, and stems in the partially glycosylated form and in roots and young hypocotyls in the fully glycosylated form. None of the isoforms is significantly expressed in leaves or cotyledons.

It localises to the secreted. It carries out the reaction 2 a phenolic donor + H2O2 = 2 a phenolic radical donor + 2 H2O. Its function is as follows. Removal of H(2)O(2), oxidation of toxic reductants, biosynthesis and degradation of lignin, suberization, auxin catabolism, response to environmental stresses such as wounding, pathogen attack and oxidative stress. These functions might be dependent on each isozyme/isoform in each plant tissue. Involved in the synthesis of highly polymerized lignins. The protein is Basic peroxidase (POD3) of Zinnia elegans (Garden zinnia).